The sequence spans 983 residues: UPF0182 protein MLBr00644 (983 aa).

7 helical membrane-spanning segments follow: residues 19 to 39 (LIMVALGVIVLLLAGPRLVDA), 63 to 83 (VVVFLVAGLVVGGIVFAGLAV), 113 to 133 (LIGVGIPAAIGLLAGIIAQSY), 175 to 195 (FVAVFLAFVVNLLAHYIFGGI), 210 to 230 (LQLVSLVGVLVLLKAVAYWLD), 259 to 279 (KLILIAIALICAAAVFSAITL), and 287 to 307 (IGLVLLMLSSLIVGTGWPLIV).

The protein belongs to the UPF0182 family.

The protein localises to the cell membrane. The polypeptide is UPF0182 protein MLBr00644 (Mycobacterium leprae (strain Br4923)).